The primary structure comprises 138 residues: Small ribosomal subunit protein uS11c (138 aa).

It belongs to the universal ribosomal protein uS11 family. Part of the 30S ribosomal subunit.

It localises to the plastid. The protein localises to the chloroplast. The chain is Small ribosomal subunit protein uS11c from Nandina domestica (Heavenly bamboo).